The primary structure comprises 37 residues: Cortex morphogenetic protein A (37 aa).

Can form a complex with SpoIVA and ClpX.

The protein localises to the forespore. Ensures proper spore envelope assembly. Represses premature cortex assembly until coat assembly successfully initiates. Also participates in a quality-control pathway that selectively removes defective sporulating cells through regulated cell death. Acts as an adaptator that delivers SpoIVA to the ClpXP proteolytic machinery for degradation, specifically in cells that improperly assemble the spore envelope. In Bacillus subtilis (strain 168), this protein is Cortex morphogenetic protein A.